The following is a 390-amino-acid chain: Altered inheritance of mitochondria protein 6 (390 aa).

Positions 1–17 (MLGLKGCLTILIGYVIA) are cleaved as a signal peptide.

It belongs to the AIM6 family.

This Saccharomyces cerevisiae (strain ATCC 204508 / S288c) (Baker's yeast) protein is Altered inheritance of mitochondria protein 6.